The chain runs to 829 residues: Periplasmic nitrate reductase (829 aa).

A signal peptide (tat-type signal) is located at residues 1–30; that stretch reads MKMTRRAFVKANAAASAAAVAGITLPASAA. The 4Fe-4S Mo/W bis-MGD-type domain occupies 41-97; sequence ITWDKAPCRFCGTGCSVLVGTQNGKVVATQGDPEAPVNKGLNCIKGYFLSKIMYGQD. The [4Fe-4S] cluster site is built by C48, C51, C55, and C83. Mo-bis(molybdopterin guanine dinucleotide) is bound by residues K85, Q152, N177, C181, 214–221, 245–249, 264–266, M374, Q378, N484, 510–511, K533, D560, and 718–727; these read WGSNMAEM, STYYH, QSD, SD, and TGRVLEHWHT. F794 provides a ligand contact to substrate. Mo-bis(molybdopterin guanine dinucleotide) contacts are provided by N802 and K819.

The protein belongs to the prokaryotic molybdopterin-containing oxidoreductase family. NasA/NapA/NarB subfamily. In terms of assembly, component of the periplasmic nitrate reductase NapAB complex composed of NapA and NapB. [4Fe-4S] cluster serves as cofactor. It depends on Mo-bis(molybdopterin guanine dinucleotide) as a cofactor. Post-translationally, predicted to be exported by the Tat system. The position of the signal peptide cleavage has not been experimentally proven.

It localises to the periplasm. The enzyme catalyses 2 Fe(II)-[cytochrome] + nitrate + 2 H(+) = 2 Fe(III)-[cytochrome] + nitrite + H2O. In terms of biological role, catalytic subunit of the periplasmic nitrate reductase complex NapAB. Receives electrons from NapB and catalyzes the reduction of nitrate to nitrite. This chain is Periplasmic nitrate reductase, found in Vibrio vulnificus (strain YJ016).